The sequence spans 330 residues: AH receptor-interacting protein (330 aa).

At Ser43 the chain carries Phosphoserine. The 93-residue stretch at 54 to 146 folds into the PPIase FKBP-type domain; sequence RVRGKPMELI…DLDALQQNPQ (93 aa). 3 TPR repeats span residues 179–212, 231–264, and 265–298; these read VPVI…LKNL, TPLL…YDDN, and VKAY…DPAM.

As to quaternary structure, interacts with RET in the pituitary gland; this interaction prevents the formation of the AIP-survivin complex.

It localises to the cytoplasm. May play a positive role in AHR-mediated (aromatic hydrocarbon receptor) signaling, possibly by influencing its receptivity for ligand and/or its nuclear targeting. In Bos taurus (Bovine), this protein is AH receptor-interacting protein (AIP).